We begin with the raw amino-acid sequence, 242 residues long: Prosalusin (242 aa).

An N-terminal signal peptide occupies residues 1-26 (MAAATRSCRPWGSLLGLIWLVSAAAA). Positions 27-189 (SWDLSSLRCN…SSWVVYGTNY (163 aa)) are excised as a propeptide. ATP is bound at residue 93–100 (GWTGTGKS). N149 carries N-linked (GlcNAc...) asparagine glycosylation.

Belongs to the ClpA/ClpB family. Torsin subfamily.

Its subcellular location is the secreted. In terms of biological role, salusin may be a endocrine and/or paracrine factor able to increase intracellular calcium concentrations and induce cell mitogenesis. Salusin may also be a potent hypotensive peptide. The chain is Prosalusin (TOR2A) from Bos taurus (Bovine).